The sequence spans 977 residues: Macrophage colony-stimulating factor 1 receptor (977 aa).

The N-terminal stretch at 1–18 is a signal peptide; it reads MFFALLFLIGILLGQVQG. Over 19 to 519 the chain is Extracellular; it reads WSEPRIRLSS…MEVSDQIFTS (501 aa). Ig-like C2-type domains are found at residues 22-109, 120-198, 213-305, 316-407, and 408-513; these read PRIR…VHVF, PSTS…EKVS, PYVY…TQLL, PKLS…ASIT, and FDIK…MEVS. Residues cysteine 48 and cysteine 92 are joined by a disulfide bond. 10 N-linked (GlcNAc...) asparagine glycosylation sites follow: asparagine 98, asparagine 101, asparagine 154, asparagine 163, asparagine 244, asparagine 286, asparagine 298, asparagine 361, asparagine 424, and asparagine 455. 2 disulfide bridges follow: cysteine 138/cysteine 187 and cysteine 234/cysteine 289. Cysteine 430 and cysteine 495 form a disulfide bridge. The chain crosses the membrane as a helical span at residues 520-540; sequence AMCGSTVAMVVLGLLLIFMIY. Residues 541–977 are Cytoplasmic-facing; the sequence is KYKQKPRYEI…LMKPNNYQFC (437 aa). The regulatory juxtamembrane domain stretch occupies residues 544–576; it reads QKPRYEIRWKIIEATNGNNYTFIDPTQLPYNEK. A Phosphotyrosine; by autocatalysis modification is found at tyrosine 563. The Protein kinase domain occupies 584-917; it reads LKLGKTLGAG…KISQMIQRML (334 aa). ATP-binding positions include 590-598 and lysine 618; that span reads LGAGAFGKV. Phosphotyrosine; by autocatalysis is present on residues tyrosine 701 and tyrosine 725. Residue aspartate 781 is the Proton acceptor of the active site. Positions 799-821 are activation loop; the sequence is DFGLARDIMNDSNYVVKGNARLP. Phosphotyrosine; by autocatalysis occurs at positions 812 and 929. Residues 919–977 are disordered; that stretch reads ETSEQQDTQEYKNIPTEAEAEQQLESCDPVKHEDESFETSCDQEEEDQPLMKPNNYQFC. The span at 953–966 shows a compositional bias: acidic residues; sequence ESFETSCDQEEEDQ. Tyrosine 974 is modified (phosphotyrosine; by autocatalysis).

Belongs to the protein kinase superfamily. Tyr protein kinase family. CSF-1/PDGF receptor subfamily. As to quaternary structure, monomer. Homodimer. Interacts with CSF1. In terms of processing, autophosphorylated in response to CSF1 binding. autophosphorylation, leading to its degradation. Post-translationally, ubiquitinated. Becomes rapidly polyubiquitinated after autophosphorylation, leading to its degradation.

Its subcellular location is the cell membrane. It carries out the reaction L-tyrosyl-[protein] + ATP = O-phospho-L-tyrosyl-[protein] + ADP + H(+). With respect to regulation, present in an inactive conformation in the absence of bound ligand. CSF1 binding leads to dimerization and activation by autophosphorylation on tyrosine residues. Tyrosine-protein kinase that acts as a cell-surface receptor for CSF1 and plays an essential role in the regulation of survival, proliferation and differentiation of hematopoietic precursor cells, especially mononuclear phagocytes, such as macrophages and monocytes. Plays an important role in innate immunity and in inflammatory processes. Plays an important role in the regulation of osteoclast proliferation and differentiation, the regulation of bone resorption, and is required for normal bone development. Promotes reorganization of the actin cytoskeleton, regulates formation of membrane ruffles, cell adhesion and cell migration. Activates several signaling pathways in response to ligand binding. This chain is Macrophage colony-stimulating factor 1 receptor (csf1r), found in Danio rerio (Zebrafish).